We begin with the raw amino-acid sequence, 156 residues long: Putative HTH-type transcriptional regulator BadM (156 aa).

An HTH rrf2-type domain is found at 4-130 (RLQKSTMCGL…RSVSITSLLK (127 aa)). The segment at 136–156 (RRKTERGPNGASARHSSAGRA) is disordered. Over residues 145 to 156 (GASARHSSAGRA) the composition is skewed to low complexity.

The protein is Putative HTH-type transcriptional regulator BadM (badM) of Rhodopseudomonas palustris (strain ATCC BAA-98 / CGA009).